The sequence spans 363 residues: Ribonuclease P protein subunit p40 (363 aa).

As to quaternary structure, component of nuclear RNase P and RNase MRP ribonucleoproteins. RNase P consists of a catalytic RNA moiety and about 10 protein subunits; POP1, POP4, POP5, POP7, RPP14, RPP21, RPP25, RPP30, RPP38 and RPP40. Within the RNase P complex, POP1, POP7 and RPP25 form the 'finger' subcomplex, POP5, RPP14, RPP40 and homodimeric RPP30 form the 'palm' subcomplex, and RPP21, POP4 and RPP38 form the 'wrist' subcomplex. All subunits of the RNase P complex interact with the catalytic RNA. Several subunits of RNase P are also part of the RNase MRP complex. RNase MRP consists of a catalytic RNA moiety and about 8 protein subunits; POP1, POP7, RPP25, RPP30, RPP38, RPP40 and possibly also POP4 and POP5.

The protein resides in the nucleus. The protein localises to the nucleolus. Its function is as follows. Component of ribonuclease P, a ribonucleoprotein complex that generates mature tRNA molecules by cleaving their 5'-ends. Also a component of the MRP ribonuclease complex, which cleaves pre-rRNA sequences. The polypeptide is Ribonuclease P protein subunit p40 (Rpp40) (Mus musculus (Mouse)).